The following is a 216-amino-acid chain: Cytidylate kinase (216 aa).

Residue 7–15 (GPAASGKGT) participates in ATP binding.

Belongs to the cytidylate kinase family. Type 1 subfamily.

It is found in the cytoplasm. It carries out the reaction CMP + ATP = CDP + ADP. The catalysed reaction is dCMP + ATP = dCDP + ADP. This chain is Cytidylate kinase, found in Methylocella silvestris (strain DSM 15510 / CIP 108128 / LMG 27833 / NCIMB 13906 / BL2).